Consider the following 334-residue polypeptide: Ferric enterobactin transport system permease protein FepD (334 aa).

The Periplasmic segment spans residues 1–9 (MSGSVAVTR). A helical membrane pass occupies residues 10–30 (AIAVPGLLLLLIIATALSLLI). The Cytoplasmic portion of the chain corresponds to 31–63 (GAKSLPASVVLEAFSGTCQSADCTIVLDARLPR). Residues 64-84 (TLAGLLAGGALGLAGALMQTL) traverse the membrane as a helical segment. At 85–92 (TRNPLADP) the chain is on the periplasmic side. Residues 93–113 (GLLGVNAGASFAIVLGAALFG) traverse the membrane as a helical segment. Residues 114-120 (YSSAQEQ) lie on the Cytoplasmic side of the membrane. A helical membrane pass occupies residues 121-141 (LAMAFAGALVASLIVAFTGSQ). Residues 142–151 (GGGQLSPVRL) lie on the Periplasmic side of the membrane. Residues 152-172 (TLAGVALAAVLEGLTSGIALL) form a helical membrane-spanning segment. At 173–192 (NPDVYDQLRFWQAGSLDIRN) the chain is on the cytoplasmic side. The chain crosses the membrane as a helical span at residues 193–213 (LHTLKVVLIPVLIAGATALLL). Residues 214–241 (SRALNSLSLGSDTATALGSRVARTQLIG) lie on the Periplasmic side of the membrane. Residues 242–262 (LLAITVLCGSATAIVGPIAFI) traverse the membrane as a helical segment. Residues 263–279 (GLMMPHMARWLVGADHR) are Cytoplasmic-facing. The chain crosses the membrane as a helical span at residues 280–300 (WSLPVTLLATPALLLFADIIG). The Periplasmic portion of the chain corresponds to 301–305 (RVIVP). Residues 306–326 (GELRVSVVSAFIGAPVLIFLV) traverse the membrane as a helical segment. At 327-334 (RRKTRGGA) the chain is on the cytoplasmic side.

The protein belongs to the binding-protein-dependent transport system permease family. FecCD subfamily. The complex is composed of two ATP-binding proteins (FepC), two transmembrane proteins (FepD and FepG) and a solute-binding protein (FepB).

The protein resides in the cell inner membrane. Part of the ABC transporter complex FepBDGC involved in ferric enterobactin uptake. Responsible for the translocation of the substrate across the membrane. This chain is Ferric enterobactin transport system permease protein FepD (fepD), found in Escherichia coli (strain K12).